Consider the following 351-residue polypeptide: Glycerol-1-phosphate dehydrogenase [NAD(P)+] (351 aa).

NAD(+) contacts are provided by residues glycine 98–aspartate 102 and threonine 120–serine 123. Aspartate 125 serves as a coordination point for substrate. Serine 129 contributes to the NAD(+) binding site. Position 172 (aspartate 172) interacts with substrate. Zn(2+)-binding residues include aspartate 172 and histidine 252. Position 256 (histidine 256) interacts with substrate. Histidine 268 contributes to the Zn(2+) binding site.

Belongs to the glycerol-1-phosphate dehydrogenase family. The cofactor is Zn(2+).

The protein localises to the cytoplasm. The enzyme catalyses sn-glycerol 1-phosphate + NAD(+) = dihydroxyacetone phosphate + NADH + H(+). It catalyses the reaction sn-glycerol 1-phosphate + NADP(+) = dihydroxyacetone phosphate + NADPH + H(+). It participates in membrane lipid metabolism; glycerophospholipid metabolism. Functionally, catalyzes the NAD(P)H-dependent reduction of dihydroxyacetonephosphate (DHAP or glycerone phosphate) to glycerol 1-phosphate (G1P). The G1P thus generated is used as the glycerophosphate backbone of phospholipids in the cellular membranes of Archaea. The sequence is that of Glycerol-1-phosphate dehydrogenase [NAD(P)+] from Thermococcus kodakarensis (strain ATCC BAA-918 / JCM 12380 / KOD1) (Pyrococcus kodakaraensis (strain KOD1)).